Here is a 580-residue protein sequence, read N- to C-terminus: Nuclear body protein SP140-like protein (580 aa).

The region spanning Ser-33 to Gln-149 is the HSR domain. Positions Gln-155–Asp-293 are disordered. The span at Glu-156–Leu-170 shows a compositional bias: basic and acidic residues. A Glycyl lysine isopeptide (Lys-Gly) (interchain with G-Cter in SUMO2) cross-link involves residue Lys-169. At Ser-180 the chain carries Phosphoserine. The span at Lys-207–Gly-219 shows a compositional bias: basic residues. Residues Gly-224–Asn-236 show a composition bias toward polar residues. Basic residues predominate over residues Gln-280 to Lys-290. A Glycyl lysine isopeptide (Lys-Gly) (interchain with G-Cter in SUMO2) cross-link involves residue Lys-292. Residues Asp-293–Pro-374 enclose the SAND domain. A PHD-type zinc finger spans residues Leu-403–Lys-449. The Bromo domain occupies Gln-467 to Val-570.

The sequence is that of Nuclear body protein SP140-like protein (SP140L) from Homo sapiens (Human).